A 466-amino-acid polypeptide reads, in one-letter code: Hydroxyproline dehydrogenase (466 aa).

It belongs to the proline oxidase family. Requires FAD as cofactor.

The enzyme catalyses trans-4-hydroxy-L-proline + a quinone = (3R,5S)-1-pyrroline-3-hydroxy-5-carboxylate + a quinol + H(+). The catalysed reaction is L-proline + a quinone = (S)-1-pyrroline-5-carboxylate + a quinol + H(+). It participates in amino-acid degradation; L-proline degradation into L-glutamate; L-glutamate from L-proline: step 1/2. Its function is as follows. Dehydrogenase that converts trans-4-L-hydroxyproline to delta-1-pyrroline-3-hydroxy-5-carboxylate (Hyp) using a quinone as the terminal electron acceptor. Can also use proline as a substrate but with a very much lower efficiency. Does not react with other diastereomers of Hyp: trans-4-D-hydroxyproline and cis-4-L-hydroxyproline. The sequence is that of Hydroxyproline dehydrogenase (prodh2) from Xenopus laevis (African clawed frog).